The chain runs to 167 residues: Phosphopantetheine adenylyltransferase (167 aa).

S9 lines the substrate pocket. Residues 9-10 (SF) and H17 contribute to the ATP site. Substrate contacts are provided by K41, V78, and R92. Residues 93-95 (GLR), E103, and 128-134 (SRPITAT) each bind ATP.

This sequence belongs to the bacterial CoaD family. As to quaternary structure, homohexamer. Mg(2+) serves as cofactor.

It localises to the cytoplasm. The catalysed reaction is (R)-4'-phosphopantetheine + ATP + H(+) = 3'-dephospho-CoA + diphosphate. Its pathway is cofactor biosynthesis; coenzyme A biosynthesis; CoA from (R)-pantothenate: step 4/5. In terms of biological role, reversibly transfers an adenylyl group from ATP to 4'-phosphopantetheine, yielding dephospho-CoA (dPCoA) and pyrophosphate. This is Phosphopantetheine adenylyltransferase from Rhizobium rhizogenes (strain K84 / ATCC BAA-868) (Agrobacterium radiobacter).